Here is a 131-residue protein sequence, read N- to C-terminus: Fumarate reductase subunit C (131 aa).

Helical transmembrane passes span 30–50 (EGTA…LFAL), 57–77 (WMGF…LITL), and 109–129 (IIKG…YVAL).

It belongs to the FrdC family. Part of an enzyme complex containing four subunits: a flavoprotein (FrdA), an iron-sulfur protein (FrdB), and two hydrophobic anchor proteins (FrdC and FrdD).

The protein resides in the cell inner membrane. In terms of biological role, two distinct, membrane-bound, FAD-containing enzymes are responsible for the catalysis of fumarate and succinate interconversion; fumarate reductase is used in anaerobic growth, and succinate dehydrogenase is used in aerobic growth. Anchors the catalytic components of the fumarate reductase complex to the cell inner membrane, binds quinones. The polypeptide is Fumarate reductase subunit C (Salmonella choleraesuis (strain SC-B67)).